The sequence spans 97 residues: Large ribosomal subunit protein bL28 (97 aa).

Belongs to the bacterial ribosomal protein bL28 family.

This is Large ribosomal subunit protein bL28 from Rickettsia peacockii (strain Rustic).